The chain runs to 542 residues: Prolyl 4-hydroxylase subunit alpha-3 (542 aa).

The signal sequence occupies residues 1 to 24; the sequence is MGPGARLALLALLALGGDPAAATG. The stretch at 105–129 forms a coiled coil; sequence LEATENIRALKDGYEKVEQDLPAFE. A TPR repeat occupies 225 to 258; the sequence is EDALDYLAFACFQVGNVSCALSLSREFLVYSPDN. Residue Asn240 is glycosylated (N-linked (GlcNAc...) asparagine). The region spanning 420-527 is the Fe2OG dioxygenase domain; it reads YAEYLQVVNY…KWVANKWIHE (108 aa). Positions 438 and 440 each coordinate Fe cation. Asn480 carries N-linked (GlcNAc...) asparagine glycosylation. His508 provides a ligand contact to Fe cation. Lys518 is a binding site for 2-oxoglutarate.

This sequence belongs to the P4HA family. Heterotetramer of two alpha-3 chains and two beta chains (the beta chain is the multi-functional PDI). It depends on Fe(2+) as a cofactor. The cofactor is L-ascorbate. Post-translationally, N-glycosylation plays no role in the catalytic activity.

It localises to the endoplasmic reticulum lumen. The catalysed reaction is L-prolyl-[collagen] + 2-oxoglutarate + O2 = trans-4-hydroxy-L-prolyl-[collagen] + succinate + CO2. Its function is as follows. Catalyzes the post-translational formation of 4-hydroxyproline in -Xaa-Pro-Gly- sequences in collagens and other proteins. The polypeptide is Prolyl 4-hydroxylase subunit alpha-3 (P4ha3) (Mus musculus (Mouse)).